Here is a 167-residue protein sequence, read N- to C-terminus: Large ribosomal subunit protein uL10 (167 aa).

It belongs to the universal ribosomal protein uL10 family. Part of the ribosomal stalk of the 50S ribosomal subunit. The N-terminus interacts with L11 and the large rRNA to form the base of the stalk. The C-terminus forms an elongated spine to which L12 dimers bind in a sequential fashion forming a multimeric L10(L12)X complex.

Forms part of the ribosomal stalk, playing a central role in the interaction of the ribosome with GTP-bound translation factors. This Lactiplantibacillus plantarum (strain ATCC BAA-793 / NCIMB 8826 / WCFS1) (Lactobacillus plantarum) protein is Large ribosomal subunit protein uL10.